Reading from the N-terminus, the 471-residue chain is Protein naked cuticle homolog 1 (471 aa).

Disordered regions lie at residues 1-23 and 41-82; these read MGKL…GDSF and QRCP…DEDD. Glycine 2 carries the N-myristoyl glycine lipid modification. Basic and acidic residues predominate over residues 62–75; that stretch reads GTRELVGDTSREAL. Positions 125–190 are interaction with DVL1, DVL2 and DVL3; sequence QCDVSVEEDS…LRVKLTVAPD (66 aa). The region spanning 131–166 is the EF-hand domain; sequence EEDSRQEWTFTLYDFDNNGKVTREDITSLLHTIYEV. Positions 144, 146, 148, 150, and 155 each coordinate Ca(2+). 3 disordered regions span residues 273–314, 337–382, and 448–471; these read GPGS…QGVD, GTQD…SPSA, and QAVQ…FYQP. Residues 453–471 show a composition bias toward basic residues; sequence HEHHHHHEHHHHYHHFYQP.

The protein belongs to the NKD family. In terms of assembly, interacts with DVL1, DVL2, DVL3 and PPP2R3A. As to expression, highly expressed in lung. Also expressed in brain, heart, kidney, liver, skin, stomach and testis. Within the testis expression is found in the seminiferous epithelium and round and elongating spermatids.

It is found in the cell membrane. The protein resides in the cytoplasm. Cell autonomous antagonist of the canonical Wnt signaling pathway. May activate a second Wnt signaling pathway that controls planar cell polarity. Required for spermatogenesis. The sequence is that of Protein naked cuticle homolog 1 (Nkd1) from Mus musculus (Mouse).